Consider the following 509-residue polypeptide: MQSWSRVYCSLAKRGHFSRISHGLQAVSAVPLRTYADQPIDADVTVIGSGPGGYVAAIKAAQLGFKTVCVEKNETLGGTCLNVGCIPSKALLNNSHYYHMAHGKDFASRGIEMSEVRLNLEKMMEQKSTAVKALTGGIAHLFKQNKVVHVNGYGKITGKNQVTAKKADGSTQVIDTKNILIATGSEVTPFPGITIDEDTIVSSTGALSLKKVPEKMVVIGAGVIGVELGSVWQRLGADVTAVEFLGHVGGVGIDMEISKNFQRILQKQGFKFKLNTKVTGATKKSDGKIDVSIEGASGGKAEVITCDVLLVCIGRRPFTQNLGLEELGIELDPRGRIPVNTRFQTKIPNIYAIGDVVAGPMLAHKAEDEGIICVEGMAGGAVPIDYNCVPSVIYTHPEVAWVGKSEEQLKEEGIEYKVGKFPFAANSRAKTNADTDGMVKILGQKSTDRVLGAHILGPGAGEMVNEAALALEYGASCEDIARVCHAHPTLSEAFREANLAASFGKSINF.

A mitochondrion-targeting transit peptide spans 1–35; sequence MQSWSRVYCSLAKRGHFSRISHGLQAVSAVPLRTY. Lysine 66 carries the post-translational modification N6-acetyllysine; alternate. At lysine 66 the chain carries N6-succinyllysine; alternate. FAD-binding positions include 71–80 and lysine 89; that span reads EKNETLGGTC. A disulfide bridge connects residues cysteine 80 and cysteine 85. Lysine 104, lysine 122, lysine 132, and lysine 143 each carry N6-acetyllysine; alternate. 4 positions are modified to N6-succinyllysine; alternate: lysine 104, lysine 122, lysine 132, and lysine 143. Glycine 154 provides a ligand contact to FAD. Lysine 159 and lysine 166 each carry N6-succinyllysine. 183–185 provides a ligand contact to FAD; it reads TGS. NAD(+) is bound by residues 220 to 227 and glutamate 243; that span reads GAGVIGVE. Lysine 273 and lysine 277 each carry N6-succinyllysine. Residue valine 278 coordinates NAD(+). Serine 285 and serine 297 each carry phosphoserine. Glycine 314 contributes to the NAD(+) binding site. Position 346 is an N6-acetyllysine (lysine 346). FAD-binding positions include aspartate 355 and 361 to 364; that span reads MLAH. Position 410 is an N6-acetyllysine; alternate (lysine 410). N6-succinyllysine; alternate is present on lysine 410. Residues lysine 417 and lysine 420 each carry the N6-acetyllysine modification. Lysine 430 carries the N6-succinyllysine modification. The Proton acceptor role is filled by histidine 487. Serine 502 carries the phosphoserine modification. The residue at position 505 (lysine 505) is an N6-acetyllysine; alternate. Lysine 505 bears the N6-succinyllysine; alternate mark.

It belongs to the class-I pyridine nucleotide-disulfide oxidoreductase family. As to quaternary structure, homodimer. Part of the multimeric pyruvate dehydrogenase complex that contains multiple copies of pyruvate dehydrogenase (subunits PDHA (PDHA1 or PDHA2) and PDHB, E1), dihydrolipoamide acetyltransferase (DLAT, E2) and lipoamide dehydrogenase (DLD, E3). These subunits are bound to an inner core composed of about 48 DLAT and 12 PDHX molecules (by non covalent bonds). The 2-oxoglutarate dehydrogenase complex is composed of OGDH (2-oxoglutarate dehydrogenase; E1), DLST (dihydrolipoamide succinyltransferase; E2), DLD (dihydrolipoamide dehydrogenase; E3) and the assembly factor KGD4. It contains multiple copies of the three enzymatic components (E1, E2 and E3). In the nucleus, the 2-oxoglutarate dehydrogenase complex associates with KAT2A. Interacts with PDHX. The cofactor is FAD. Tyrosine phosphorylated.

It is found in the mitochondrion matrix. The protein resides in the nucleus. It localises to the cell projection. The protein localises to the cilium. Its subcellular location is the flagellum. It is found in the cytoplasmic vesicle. The protein resides in the secretory vesicle. It localises to the acrosome. It catalyses the reaction N(6)-[(R)-dihydrolipoyl]-L-lysyl-[protein] + NAD(+) = N(6)-[(R)-lipoyl]-L-lysyl-[protein] + NADH + H(+). Functionally, lipoamide dehydrogenase is a component of the glycine cleavage system as well as an E3 component of three alpha-ketoacid dehydrogenase complexes (pyruvate-, alpha-ketoglutarate-, and branched-chain amino acid-dehydrogenase complex). The 2-oxoglutarate dehydrogenase complex is mainly active in the mitochondrion. A fraction of the 2-oxoglutarate dehydrogenase complex also localizes in the nucleus and is required for lysine succinylation of histones: associates with KAT2A on chromatin and provides succinyl-CoA to histone succinyltransferase KAT2A. In monomeric form may have additional moonlighting function as serine protease. Involved in the hyperactivation of spermatazoa during capacitation and in the spermatazoal acrosome reaction. The protein is Dihydrolipoyl dehydrogenase, mitochondrial (DLD) of Canis lupus familiaris (Dog).